We begin with the raw amino-acid sequence, 601 residues long: Probable HECT-type ubiquitin ligase-interacting protein creD (601 aa).

2 disordered regions span residues 374-397 (EVDPSGYRTPGPGSGPGTPFGTLS) and 455-489 (SADYFGPSSGSNSHSPASPELSRRPSDEGYHDHDH). A compositionally biased stretch (low complexity) spans 461–473 (PSSGSNSHSPASP). Residues 475 to 489 (LSRRPSDEGYHDHDH) are compositionally biased toward basic and acidic residues.

Belongs to the arrestin family. Interacts with hulA.

Component of the regulatory network controlling carbon source utilization through ubiquitination and deubiquitination involving creA, creB, creC, creD and acrB. May be involved in signaling by recognizing appropriately phosphorylated substrates via its arrestin domains and then recruit a HECT-type ubiquitin ligase such as hulA, leading to ubiquitination of the substrate, providing a link between ubiquitination and phosphorylation in protein regulation and stability. This chain is Probable HECT-type ubiquitin ligase-interacting protein creD (creD), found in Neosartorya fischeri (strain ATCC 1020 / DSM 3700 / CBS 544.65 / FGSC A1164 / JCM 1740 / NRRL 181 / WB 181) (Aspergillus fischerianus).